Consider the following 362-residue polypeptide: MAQIFNFSSGPAMLPAEVLKQAQQELRDWNGLGTSVMEVSHRGKEFIQVAEEAEKDFRDLLNVPSNYKVLFCHGGGRGQFAAVPLNILGDKTTADYVDAGYWAASAIKEAKKYCTPNVFDAKVTVDGLRAVKPMREWQLSDNAAYMHYCPNETIDGIAIDETPDFGKDVVVAADFSSTILSRPIDVSRYGVIYAGAQKNIGPAGLTIVIVREDLLGKANIACPSILDYSILNDNGSMFNTPPTFAWYLSGLVFKWLRANGGVAEMDKINQQKAELLYGVIDNSDFYRNDVAKANRSRMNVPFQLADSALDKLFLEESFAAGLHALKGHRVVGGMRASIYNAMPLEGVKALTDFMVEFERRHG.

L-glutamate-binding residues include Ser-9 and Arg-42. Residues 76–77, Trp-102, Thr-153, Asp-174, and Gln-197 contribute to the pyridoxal 5'-phosphate site; that span reads GR. Lys-198 carries the post-translational modification N6-(pyridoxal phosphate)lysine. A pyridoxal 5'-phosphate-binding site is contributed by 239–240; it reads NT.

The protein belongs to the class-V pyridoxal-phosphate-dependent aminotransferase family. SerC subfamily. In terms of assembly, homodimer. The cofactor is pyridoxal 5'-phosphate.

The protein localises to the cytoplasm. The enzyme catalyses O-phospho-L-serine + 2-oxoglutarate = 3-phosphooxypyruvate + L-glutamate. It catalyses the reaction 4-(phosphooxy)-L-threonine + 2-oxoglutarate = (R)-3-hydroxy-2-oxo-4-phosphooxybutanoate + L-glutamate. It functions in the pathway amino-acid biosynthesis; L-serine biosynthesis; L-serine from 3-phospho-D-glycerate: step 2/3. It participates in cofactor biosynthesis; pyridoxine 5'-phosphate biosynthesis; pyridoxine 5'-phosphate from D-erythrose 4-phosphate: step 3/5. Catalyzes the reversible conversion of 3-phosphohydroxypyruvate to phosphoserine and of 3-hydroxy-2-oxo-4-phosphonooxybutanoate to phosphohydroxythreonine. In Escherichia coli O139:H28 (strain E24377A / ETEC), this protein is Phosphoserine aminotransferase.